The following is a 231-amino-acid chain: Acyl-protein thioesterase 2 (231 aa).

Cysteine 2 carries the S-palmitoyl cysteine lipid modification. A Phosphoserine modification is found at serine 82. Active-site charge relay system residues include serine 122, aspartate 176, and histidine 210.

It belongs to the AB hydrolase superfamily. AB hydrolase 2 family. Ubiquitous; detected at low levels.

The protein resides in the cytoplasm. It carries out the reaction S-hexadecanoyl-L-cysteinyl-[protein] + H2O = L-cysteinyl-[protein] + hexadecanoate + H(+). It catalyses the reaction prostaglandin E2 1-glyceryl ester + H2O = prostaglandin E2 + glycerol + H(+). The enzyme catalyses 1-hexadecanoyl-sn-glycero-3-phosphocholine + H2O = sn-glycerol 3-phosphocholine + hexadecanoate + H(+). The catalysed reaction is 1-octadecanoyl-sn-glycero-3-phosphocholine + H2O = octadecanoate + sn-glycerol 3-phosphocholine + H(+). It carries out the reaction 1-hexadecanoyl-sn-glycero-3-phosphate + H2O = sn-glycerol 3-phosphate + hexadecanoate + H(+). It catalyses the reaction 1-hexadecanoyl-sn-glycero-3-phospho-L-serine + H2O = sn-glycero-3-phospho-L-serine + hexadecanoate + H(+). Its function is as follows. Acts as an acyl-protein thioesterase hydrolyzing fatty acids from S-acylated cysteine residues in proteins such as trimeric G alpha proteins, GSDMD, GAP43, ZDHHC6 or HRAS. Deacylates GAP43. Mediates depalmitoylation of ZDHHC6. Has lysophospholipase activity. Hydrolyzes prostaglandin glycerol esters (PG-Gs). Hydrolyzes PG-Gs in the following order prostaglandin D2-glycerol ester (PGD2-G) &gt; prostaglandin E2 glycerol ester (PGE2-G) &gt; prostaglandin F2-alpha-glycerol ester (PGF2-alpha-G). Hydrolyzes 1-arachidonoylglycerol but not 2-arachidonoylglycerol or arachidonoylethanolamide. This chain is Acyl-protein thioesterase 2 (Lypla2), found in Mus musculus (Mouse).